Here is a 570-residue protein sequence, read N- to C-terminus: MDRSKRNSIAGFPPRVERLEEFEGGGGGDGNTVQVGRVSSSSYRAIISAFSRLTSLDDFTREKIGSGFFSEVFKVRHRASGQVMALKMNTLSSNRANLLKEMQLMNRLSHPNILRFMGVCVHQGQLHALTEYINSGNLEQLLDSNLYLPWTVRVKLAYDIAVGLSYLHFKGIFHRDLTSKNCLIKRDENGYSAVVADFGLAEKIPDASIGSEKLAVVGSPFWMAPEVLRDEPYNEKADVFSYGIILCEIIARIQADPDYLPRTENFGLDYDAFQHMVGDCPSDFLQLTFNCCNMDPKLRPSFEEIGKTLEEIMSRLQEEELERDRKLQPTAKGLLEKVPGGKRLSSLDDKIPHKSPRPRRTIWLSRSQSDIFSRKPPRTVNVLDPYYQPRDGATHTPKVNPFSARQDLKGGKVKFFDLPSKSVISLVFDLDAPGPGTVSLADCQEPLAPSSRRWRSLPGSPEFLHQACPFVGCEESLSDGPPPRLSSLKYRVREIPPFRTSALSATSAHEAMDCSNPQEENGFVPRPKGTSPCSGAASEEMEVEEERPRRAPVHFSISGISLQTQGEQDG.

The region spanning 58 to 313 (DFTREKIGSG…EIGKTLEEIM (256 aa)) is the Protein kinase domain. Residues 64–72 (IGSGFFSEV) and lysine 87 each bind ATP. Aspartate 176 serves as the catalytic Proton acceptor. A Phosphoserine; by autocatalysis modification is found at serine 219. Phosphoserine is present on residues serine 369, serine 456, and serine 460. The disordered stretch occupies residues 513–570 (DCSNPQEENGFVPRPKGTSPCSGAASEEMEVEEERPRRAPVHFSISGISLQTQGEQDG). Polar residues predominate over residues 558–570 (SGISLQTQGEQDG).

This sequence belongs to the protein kinase superfamily. TKL Ser/Thr protein kinase family. Mg(2+) serves as cofactor. The cofactor is Mn(2+). In terms of tissue distribution, predominantly expressed in testis and prostate. Found predominantly in non-germinal Sertoli cells.

The protein resides in the nucleus. It carries out the reaction L-seryl-[protein] + ATP = O-phospho-L-seryl-[protein] + ADP + H(+). The catalysed reaction is L-threonyl-[protein] + ATP = O-phospho-L-threonyl-[protein] + ADP + H(+). It catalyses the reaction L-tyrosyl-[protein] + ATP = O-phospho-L-tyrosyl-[protein] + ADP + H(+). Activated by autophosphorylation on Ser-219. Functionally, dual specificity protein kinase activity catalyzing autophosphorylation and phosphorylation of exogenous substrates on both serine/threonine and tyrosine residues. Phosphorylates cofilin at 'Ser-3'. May play an important role in spermatogenesis. This Rattus norvegicus (Rat) protein is Dual specificity testis-specific protein kinase 2 (Tesk2).